A 663-amino-acid chain; its full sequence is DNA ligase (663 aa).

Residues 31–35 (DFEYD), 80–81 (SL), and Glu-110 each bind NAD(+). Lys-112 (N6-AMP-lysine intermediate) is an active-site residue. Residues Arg-133, Glu-168, Lys-284, and Lys-308 each contribute to the NAD(+) site. Zn(2+)-binding residues include Cys-402, Cys-405, Cys-420, and Cys-425. The region spanning 586–663 (IKDNRFEGKT…DEDKFRKMIE (78 aa)) is the BRCT domain.

Belongs to the NAD-dependent DNA ligase family. LigA subfamily. The cofactor is Mg(2+). It depends on Mn(2+) as a cofactor.

The catalysed reaction is NAD(+) + (deoxyribonucleotide)n-3'-hydroxyl + 5'-phospho-(deoxyribonucleotide)m = (deoxyribonucleotide)n+m + AMP + beta-nicotinamide D-nucleotide.. Functionally, DNA ligase that catalyzes the formation of phosphodiester linkages between 5'-phosphoryl and 3'-hydroxyl groups in double-stranded DNA using NAD as a coenzyme and as the energy source for the reaction. It is essential for DNA replication and repair of damaged DNA. This is DNA ligase from Acetivibrio thermocellus (strain ATCC 27405 / DSM 1237 / JCM 9322 / NBRC 103400 / NCIMB 10682 / NRRL B-4536 / VPI 7372) (Clostridium thermocellum).